A 421-amino-acid chain; its full sequence is UDP-N-acetylglucosamine 1-carboxyvinyltransferase (421 aa).

Phosphoenolpyruvate is bound at residue 22–23; the sequence is KN. A UDP-N-acetyl-alpha-D-glucosamine-binding site is contributed by arginine 92. Cysteine 116 serves as the catalytic Proton donor. Cysteine 116 is modified (2-(S-cysteinyl)pyruvic acid O-phosphothioketal). The UDP-N-acetyl-alpha-D-glucosamine site is built by aspartate 306 and valine 328.

The protein belongs to the EPSP synthase family. MurA subfamily.

The protein resides in the cytoplasm. It catalyses the reaction phosphoenolpyruvate + UDP-N-acetyl-alpha-D-glucosamine = UDP-N-acetyl-3-O-(1-carboxyvinyl)-alpha-D-glucosamine + phosphate. It functions in the pathway cell wall biogenesis; peptidoglycan biosynthesis. In terms of biological role, cell wall formation. Adds enolpyruvyl to UDP-N-acetylglucosamine. This chain is UDP-N-acetylglucosamine 1-carboxyvinyltransferase, found in Thermotoga maritima (strain ATCC 43589 / DSM 3109 / JCM 10099 / NBRC 100826 / MSB8).